The sequence spans 358 residues: tRNA-specific 2-thiouridylase MnmA (358 aa).

ATP is bound by residues 6–13 (ALSGGVDS) and Met-32. Cys-103 acts as the Nucleophile in catalysis. Residues Cys-103 and Cys-201 are joined by a disulfide bond. Residue Gly-127 participates in ATP binding. Positions 151-153 (KDQ) are interaction with tRNA. The active-site Cysteine persulfide intermediate is Cys-201.

Belongs to the MnmA/TRMU family.

The protein localises to the cytoplasm. The enzyme catalyses S-sulfanyl-L-cysteinyl-[protein] + uridine(34) in tRNA + AH2 + ATP = 2-thiouridine(34) in tRNA + L-cysteinyl-[protein] + A + AMP + diphosphate + H(+). In terms of biological role, catalyzes the 2-thiolation of uridine at the wobble position (U34) of tRNA, leading to the formation of s(2)U34. This is tRNA-specific 2-thiouridylase MnmA from Thermotoga maritima (strain ATCC 43589 / DSM 3109 / JCM 10099 / NBRC 100826 / MSB8).